The chain runs to 164 residues: Axial regulator YABBY 5 (164 aa).

A C4-type zinc finger spans residues 16–43 (CNFCNIILAVNVPCSSLFDIVTVRCGHC).

It belongs to the YABBY family. As to quaternary structure, binds to LUG and LUH; these complexes promote adaxial cell identity in leaves as well as embryonic shoot apical meristem (SAM) initiation and postembryonic SAM maintenance. Interacts with SPL/NZZ and SPEAR2.

It is found in the nucleus. Its function is as follows. Promotes adaxial cell identity. Regulates the initiation of embryonic shoot apical meristem (SAM) development. The chain is Axial regulator YABBY 5 (YAB5) from Arabidopsis thaliana (Mouse-ear cress).